We begin with the raw amino-acid sequence, 898 residues long: MPSALTASEIREAFLKFFEERGHRRVASSSLVPANDPTLMFTNAGMVQFKDVFTGRETRDYRRATTSQKCVRAGGKHNDLDNVGFTARHHTFFEMLGNFSFGDYFKADAIAYGWEFVTRTLGLSTDRLAVTVFNGEGGTPWDEEAYELWKKQGVPAERLYKLGLKDNFWAMGDTGPCGPCSEIHYHQGDDIPCVEEAEGKKCQGVACDCDRWLEIWNLVFMQFERKEKDGPLIPLPKPSIDTGAGLERIASVVQGKRSNYETDLFQNILATVSELCGKPYSQESGASQRVVADHSRAAAFLISDGVQPSNEGRGYVLRRIMRRAIRHGTQQLGLEDVFFFKVVDRVIELMGDAYPELRESRTFVLEVCRHEETSFRQTLSRGLKLIEEELSELQKAGGKQLSGDVVFLLHGTYGFPWDLTQIIARERGLDVDLVRFEERLKEEADKNKFAGSGDKATGEVYLKLAERLGTTEFLGYEGEGHEGEGSIRAIVKDGAEVTQATQGDTVELVLDRTPFYGESGGQMGDTGRIVGHGGKAVAKVTDAQRPVPGLVVHSVEVSEGTFKVGDMVQAGVDSERRKSIRANHSATHLLHKALKLVLGEHVKQAGSVVAPDYLRFDFAHFSPATSAQLEQVEDLVNGWIRDNAGAETRVMSLEDAKKSGAVAMFGEKYGETVRVVTVHPESTELCGGTHVRRSGDIGLFKIASESGVASGVRRIVALTGIGALQHVREQEHELRKVAELLKSNPKEVSKRVEATQKRVKELERKVEEVAVKAQTASSKDLLEQARDVNGMKVLATQVDAADDNVLRGMADQLRDRIRSGVVAIGGEKDGRAIILVAATKDVVAKGINAGALVREMAKEVGGKGGGKAEMAQAGGPDASKLPAALEKLYELVKGVGTA.

Zn(2+)-binding residues include H584, H588, C686, and H690.

It belongs to the class-II aminoacyl-tRNA synthetase family. Requires Zn(2+) as cofactor.

Its subcellular location is the cytoplasm. The enzyme catalyses tRNA(Ala) + L-alanine + ATP = L-alanyl-tRNA(Ala) + AMP + diphosphate. Its function is as follows. Catalyzes the attachment of alanine to tRNA(Ala) in a two-step reaction: alanine is first activated by ATP to form Ala-AMP and then transferred to the acceptor end of tRNA(Ala). Also edits incorrectly charged Ser-tRNA(Ala) and Gly-tRNA(Ala) via its editing domain. This Myxococcus xanthus (strain DK1622) protein is Alanine--tRNA ligase.